The chain runs to 417 residues: Carboxypeptidase A2 (417 aa).

An N-terminal signal peptide occupies residues 1–16 (MRLTPLLVALFGYIYC). Positions 17 to 112 (QETFVGDQVL…EMLFNQQRER (96 aa)) are cleaved as a propeptide — activation peptide. Positions 120-412 (AYHTLEEIYQ…LGLKTIMEHV (293 aa)) constitute a Peptidase M14 domain. 2 residues coordinate Zn(2+): H177 and E180. Substrate-binding positions include 177–180 (HARE), R235, and 252–253 (NR). A disulfide bond links C246 and C269. H304 provides a ligand contact to Zn(2+). 305–306 (SY) contributes to the substrate binding site. A disulfide bridge links C318 with C352. Y356 contributes to the substrate binding site. The active-site Proton donor/acceptor is the E378.

This sequence belongs to the peptidase M14 family. Zn(2+) is required as a cofactor.

The protein resides in the secreted. The catalysed reaction is Similar to that of carboxypeptidase A (EC 3.4.17.1), but with a preference for bulkier C-terminal residues.. Carboxypeptidase that catalyzes the release of a C-terminal amino acid, with a preference for large aromatic C-terminal residues. This Mus musculus (Mouse) protein is Carboxypeptidase A2 (Cpa2).